The following is a 393-amino-acid chain: Sulfite oxidase (393 aa).

The segment at 1–27 is disordered; it reads MPGIRGPSEYSQEPPRHPSLKVNAKEP. The interval 10–242 is moco domain; it reads YSQEPPRHPS…QGFFMQKDYK (233 aa). Mo-molybdopterin-binding positions include 49–53, C98, 159–161, H202, R207, and 218–220; these read YKRNH, SVD, and SVK. The homodimerization stretch occupies residues 243–393; that stretch reads MFPPSVNWDN…VLLRLGHSNL (151 aa). The Microbody targeting signal motif lies at 391-393; that stretch reads SNL.

Predominantly monomer; also homodimer. Mo-molybdopterin is required as a cofactor.

It is found in the peroxisome. The enzyme catalyses sulfite + O2 + H2O = sulfate + H2O2. The protein operates within energy metabolism; sulfur metabolism. Its function is as follows. Probably involved in sulfite oxidative detoxification. This chain is Sulfite oxidase (SOX), found in Arabidopsis thaliana (Mouse-ear cress).